A 221-amino-acid polypeptide reads, in one-letter code: uncharacterized protein (221 aa).

The signal sequence occupies residues Met1 to Ser26.

This is an uncharacterized protein from Mycobacterium tuberculosis (strain ATCC 25618 / H37Rv).